The following is a 451-amino-acid chain: Glyceraldehyde-3-phosphate dehydrogenase B, chloroplastic (451 aa).

Residues 1–83 constitute a chloroplast transit peptide; that stretch reads MASHAALAPS…AAPVRGETVA (83 aa). NADP(+) is bound by residues 94-95, Asp118, and Arg163; that span reads RI. D-glyceraldehyde 3-phosphate contacts are provided by residues 237–239, Thr268, Arg283, 296–297, and Arg319; these read SCT and TG. Cys238 (nucleophile) is an active-site residue. Asn402 provides a ligand contact to NADP(+).

Belongs to the glyceraldehyde-3-phosphate dehydrogenase family. In terms of assembly, tetramer of either four A chains (GAPDH 2) or two A and two B chains (GAPDH 1).

The protein resides in the plastid. Its subcellular location is the chloroplast. It catalyses the reaction D-glyceraldehyde 3-phosphate + phosphate + NADP(+) = (2R)-3-phospho-glyceroyl phosphate + NADPH + H(+). Its pathway is carbohydrate biosynthesis; Calvin cycle. The chain is Glyceraldehyde-3-phosphate dehydrogenase B, chloroplastic (GAPB) from Spinacia oleracea (Spinach).